The primary structure comprises 384 residues: Putative sarcosine oxidase (384 aa).

Residue 6-36 (DVVVVGAGIFGSCTAYNCQKIGLKTLLLEQF) coordinates FAD. The residue at position 315 (C315) is an S-8alpha-FAD cysteine.

It belongs to the MSOX/MTOX family. Requires FAD as cofactor.

It catalyses the reaction sarcosine + O2 + H2O = formaldehyde + glycine + H2O2. This chain is Putative sarcosine oxidase, found in Caenorhabditis elegans.